Consider the following 374-residue polypeptide: Alanine racemase (374 aa).

The active-site Proton acceptor; specific for D-alanine is lysine 35. Lysine 35 carries the post-translational modification N6-(pyridoxal phosphate)lysine. A substrate-binding site is contributed by arginine 130. Catalysis depends on tyrosine 261, which acts as the Proton acceptor; specific for L-alanine. Methionine 309 contributes to the substrate binding site.

It belongs to the alanine racemase family. It depends on pyridoxal 5'-phosphate as a cofactor.

It carries out the reaction L-alanine = D-alanine. Its pathway is amino-acid biosynthesis; D-alanine biosynthesis; D-alanine from L-alanine: step 1/1. In terms of biological role, catalyzes the interconversion of L-alanine and D-alanine. May also act on other amino acids. The sequence is that of Alanine racemase (alr) from Albidiferax ferrireducens (strain ATCC BAA-621 / DSM 15236 / T118) (Rhodoferax ferrireducens).